We begin with the raw amino-acid sequence, 241 residues long: 1-(5-phosphoribosyl)-5-[(5-phosphoribosylamino)methylideneamino] imidazole-4-carboxamide isomerase (241 aa).

Asp8 functions as the Proton acceptor in the catalytic mechanism. The active-site Proton donor is the Asp130.

This sequence belongs to the HisA/HisF family.

The protein localises to the cytoplasm. The enzyme catalyses 1-(5-phospho-beta-D-ribosyl)-5-[(5-phospho-beta-D-ribosylamino)methylideneamino]imidazole-4-carboxamide = 5-[(5-phospho-1-deoxy-D-ribulos-1-ylimino)methylamino]-1-(5-phospho-beta-D-ribosyl)imidazole-4-carboxamide. Its pathway is amino-acid biosynthesis; L-histidine biosynthesis; L-histidine from 5-phospho-alpha-D-ribose 1-diphosphate: step 4/9. The protein is 1-(5-phosphoribosyl)-5-[(5-phosphoribosylamino)methylideneamino] imidazole-4-carboxamide isomerase of Leptospira interrogans serogroup Icterohaemorrhagiae serovar copenhageni (strain Fiocruz L1-130).